Here is a 248-residue protein sequence, read N- to C-terminus: Probable septum site-determining protein MinC (248 aa).

The interval 115–144 is disordered; that stretch reads PTAVSPPPPPPPPARAEPAPPAARPAPGRM. The span at 118-138 shows a compositional bias: pro residues; sequence VSPPPPPPPPARAEPAPPAAR.

This sequence belongs to the MinC family. In terms of assembly, interacts with MinD and FtsZ.

Cell division inhibitor that blocks the formation of polar Z ring septums. Rapidly oscillates between the poles of the cell to destabilize FtsZ filaments that have formed before they mature into polar Z rings. Prevents FtsZ polymerization. The chain is Probable septum site-determining protein MinC from Xanthomonas euvesicatoria pv. vesicatoria (strain 85-10) (Xanthomonas campestris pv. vesicatoria).